Reading from the N-terminus, the 274-residue chain is MDKPKAYCRLFLPSFLLLSACTVDISQPDPSATAVDAEAKTWAVKFQHQSSFTEQSIKEITAPDLKPGDLLFSSSLGVTSFGIRVFSTSSVSHVAIFLGDNNVAEATGAGVQIVSLKKAMKHSDKLFVLRVPDLTPQQATDITAFANKIKDSGYNYRGIVEFIPFMVTRQMCSLNPFSEDFRQQCVSGLAKAQLSSVGEGDKKSWFCSEFVTDAFAKAGHPLTLAQSGWISPADLMHMRIGDVSAFKPETQLQYVGHLKPGIYIKAGRFVGLTR.

A signal peptide spans 1-20 (MDKPKAYCRLFLPSFLLLSA). Cys-21 carries the N-palmitoyl cysteine lipid modification. Cys-21 carries the S-diacylglycerol cysteine lipid modification. The active-site Nucleophile is the Cys-207. His-257 (proton acceptor) is an active-site residue.

The protein resides in the cell inner membrane. The polypeptide is Probable lipoprotein peptidase YaeF (yaeF) (Escherichia coli (strain K12)).